Consider the following 369-residue polypeptide: MTKATDEGTVIAVQANYYWVRLRNVTSQPLLCTRRTRLKKVGQKVMVGDQVRVELPPSLLLHGRSNTAPVPMVAEGDLGAIAKVYPRRTVLERPPVANAEQICLVFALTDPPLEEWQLSRFLVQAEATGLEISLCFNKQDLVQETDVKFWGDRLAAWGYAPIIISVENRWGVEKLQEKLRSRISLMAGPSGVGKSSLINLLVPGVEQQVKNVSGKLRKGRHTTRHVELFDLPHGGLLADTPGFNQPDLAVEPAQLIHLFPEARQQLTGQECFFKDCLHRGEPDCAVGQDWERYEHYLTFLEEVLAQQNPENSRETDTGLKTKTGSDGQEYDEPKLETKKYRRHSRRQEHQELQSFCEQTDLDNLQEDWE.

Residues Arg88–Pro246 form the CP-type G domain. GTP-binding positions include Asn137 to Asp140 and Gly188 to Ser196. Residues Cys271, Cys276, His278, and Cys284 each contribute to the Zn(2+) site. The interval Gln307–Glu369 is disordered. The segment covering Thr359–Glu369 has biased composition (acidic residues).

This sequence belongs to the TRAFAC class YlqF/YawG GTPase family. RsgA subfamily. As to quaternary structure, monomer. Associates with 30S ribosomal subunit, binds 16S rRNA. Zn(2+) is required as a cofactor.

It localises to the cytoplasm. Its function is as follows. One of several proteins that assist in the late maturation steps of the functional core of the 30S ribosomal subunit. Helps release RbfA from mature subunits. May play a role in the assembly of ribosomal proteins into the subunit. Circularly permuted GTPase that catalyzes slow GTP hydrolysis, GTPase activity is stimulated by the 30S ribosomal subunit. The sequence is that of Small ribosomal subunit biogenesis GTPase RsgA from Synechocystis sp. (strain ATCC 27184 / PCC 6803 / Kazusa).